The following is a 292-amino-acid chain: Insulin-like growth factor-binding protein 3 (292 aa).

The N-terminal stretch at 1–27 is a signal peptide; the sequence is MHPARPALWAAALTALTLLRGPPVARA. An IGFBP N-terminal domain is found at 36–119; that stretch reads PVVRCEPCDA…LNGRGFCANA (84 aa). Disulfide bonds link Cys40–Cys69, Cys43–Cys71, Cys51–Cys72, Cys60–Cys75, Cys83–Cys96, and Cys90–Cys116. Residues Asn118 and Asn137 are each glycosylated (N-linked (GlcNAc...) asparagine). 2 disordered regions span residues 128–152 and 178–212; these read YLPS…SVES and KGHA…TEYG. Ser149 carries the post-translational modification Phosphoserine. Basic and acidic residues predominate over residues 178–191; sequence KGHARDSQRYKVDY. Polar residues predominate over residues 192 to 203; the sequence is ESQSTDTQNFSS. Asn200 carries N-linked (GlcNAc...) asparagine glycosylation. At Ser202 the chain carries Phosphoserine. The 76-residue stretch at 211 to 286 folds into the Thyroglobulin type-1 domain; it reads YGPCRREMED…DTKGKDDVHC (76 aa). 3 cysteine pairs are disulfide-bonded: Cys214/Cys241, Cys252/Cys263, and Cys265/Cys286.

In terms of assembly, interacts with XLKD1. Binds IGF2 more than IGF1. Forms a ternary complex of about 140 to 150 kDa with IGF1 or IGF2 and a 85 kDa glycoprotein (ALS). Interacts with TMEM219. In terms of processing, phosphorylated by FAM20C in the extracellular medium.

The protein resides in the secreted. Its function is as follows. IGF-binding proteins prolong the half-life of the IGFs and have been shown to either inhibit or stimulate the growth promoting effects of the IGFs on cell culture. They alter the interaction of IGFs with their cell surface receptors. Also exhibits IGF-independent antiproliferative and apoptotic effects mediated by its receptor TMEM219/IGFBP-3R. Promotes testicular germ cell apoptosis. The sequence is that of Insulin-like growth factor-binding protein 3 (Igfbp3) from Mus musculus (Mouse).